The following is a 158-amino-acid chain: Cytochrome c2 (158 aa).

The residue at position 1 (Gln1) is a Pyrrolidone carboxylic acid. Residues Cys18, Cys21, His22, and Met102 each coordinate heme c. The segment at 129-158 is disordered; sequence AEAAPAADAAAPAAADAAAPAEPAAEGAAT.

The protein belongs to the cytochrome c family. In terms of processing, binds 1 heme c group covalently per subunit.

The protein localises to the periplasm. Cytochrome c2 is found mainly in purple, non-sulfur, photosynthetic bacteria where it functions as the electron donor to the oxidized bacteriochlorophyll in the photophosphorylation pathway. However, it may also have a role in the respiratory chain and is found in some non-photosynthetic bacteria. In Fuscovulum blasticum (Rhodobacter blasticus), this protein is Cytochrome c2.